The following is a 350-amino-acid chain: Nicotinate-nucleotide--dimethylbenzimidazole phosphoribosyltransferase (350 aa).

Glu316 serves as the catalytic Proton acceptor.

Belongs to the CobT family.

The catalysed reaction is 5,6-dimethylbenzimidazole + nicotinate beta-D-ribonucleotide = alpha-ribazole 5'-phosphate + nicotinate + H(+). It functions in the pathway nucleoside biosynthesis; alpha-ribazole biosynthesis; alpha-ribazole from 5,6-dimethylbenzimidazole: step 1/2. Catalyzes the synthesis of alpha-ribazole-5'-phosphate from nicotinate mononucleotide (NAMN) and 5,6-dimethylbenzimidazole (DMB). The protein is Nicotinate-nucleotide--dimethylbenzimidazole phosphoribosyltransferase of Bradyrhizobium diazoefficiens (strain JCM 10833 / BCRC 13528 / IAM 13628 / NBRC 14792 / USDA 110).